The sequence spans 64 residues: Large ribosomal subunit protein bL35 (64 aa).

This sequence belongs to the bacterial ribosomal protein bL35 family.

This chain is Large ribosomal subunit protein bL35, found in Clavibacter michiganensis subsp. michiganensis (strain NCPPB 382).